A 228-amino-acid polypeptide reads, in one-letter code: Urease accessory protein UreF (228 aa).

Belongs to the UreF family. UreD, UreF and UreG form a complex that acts as a GTP-hydrolysis-dependent molecular chaperone, activating the urease apoprotein by helping to assemble the nickel containing metallocenter of UreC. The UreE protein probably delivers the nickel.

The protein resides in the cytoplasm. Functionally, required for maturation of urease via the functional incorporation of the urease nickel metallocenter. The chain is Urease accessory protein UreF from Brucella ovis (strain ATCC 25840 / 63/290 / NCTC 10512).